We begin with the raw amino-acid sequence, 212 residues long: Large ribosomal subunit protein uL1 (212 aa).

It belongs to the universal ribosomal protein uL1 family. In terms of assembly, part of the 50S ribosomal subunit.

Binds directly to 23S rRNA. Probably involved in E site tRNA release. In terms of biological role, protein L1 is also a translational repressor protein, it controls the translation of its operon by binding to its mRNA. This is Large ribosomal subunit protein uL1 from Haloarcula marismortui (strain ATCC 43049 / DSM 3752 / JCM 8966 / VKM B-1809) (Halobacterium marismortui).